Here is a 118-residue protein sequence, read N- to C-terminus: UPF0145 protein PTO0347 (118 aa).

The protein belongs to the UPF0145 family.

This is UPF0145 protein PTO0347 from Picrophilus torridus (strain ATCC 700027 / DSM 9790 / JCM 10055 / NBRC 100828 / KAW 2/3).